A 74-amino-acid polypeptide reads, in one-letter code: Translation initiation factor IF-1 (74 aa).

The S1-like domain occupies 1-72; sequence MSKEDAIEVE…NKGRITYRLK (72 aa).

The protein belongs to the IF-1 family. Component of the 30S ribosomal translation pre-initiation complex which assembles on the 30S ribosome in the order IF-2 and IF-3, IF-1 and N-formylmethionyl-tRNA(fMet); mRNA recruitment can occur at any time during PIC assembly.

The protein localises to the cytoplasm. Its function is as follows. One of the essential components for the initiation of protein synthesis. Stabilizes the binding of IF-2 and IF-3 on the 30S subunit to which N-formylmethionyl-tRNA(fMet) subsequently binds. Helps modulate mRNA selection, yielding the 30S pre-initiation complex (PIC). Upon addition of the 50S ribosomal subunit IF-1, IF-2 and IF-3 are released leaving the mature 70S translation initiation complex. The sequence is that of Translation initiation factor IF-1 from Synechococcus sp. (strain JA-3-3Ab) (Cyanobacteria bacterium Yellowstone A-Prime).